The chain runs to 408 residues: Dihydrolipoyllysine-residue acetyltransferase component of pyruvate dehydrogenase complex (408 aa).

Positions 2-78 constitute a Lipoyl-binding domain; sequence PIKILMPALS…PVNSLIAVLS (77 aa). Position 43 is an N6-lipoyllysine (Lys43). In terms of domain architecture, Peripheral subunit-binding (PSBD) spans 128–165; sequence FASPLAKRLAKIGDIRLENVQGSGPHGRIVKQDILSYD. His381 is an active-site residue.

Belongs to the 2-oxoacid dehydrogenase family. As to quaternary structure, forms a 24-polypeptide structural core with octahedral symmetry. (R)-lipoate serves as cofactor.

It catalyses the reaction N(6)-[(R)-dihydrolipoyl]-L-lysyl-[protein] + acetyl-CoA = N(6)-[(R)-S(8)-acetyldihydrolipoyl]-L-lysyl-[protein] + CoA. In terms of biological role, the pyruvate dehydrogenase complex catalyzes the overall conversion of pyruvate to acetyl-CoA and CO(2). It contains multiple copies of three enzymatic components: pyruvate dehydrogenase (E1), dihydrolipoamide acetyltransferase (E2) and lipoamide dehydrogenase (E3). The protein is Dihydrolipoyllysine-residue acetyltransferase component of pyruvate dehydrogenase complex (pdhC) of Rickettsia prowazekii (strain Madrid E).